A 131-amino-acid polypeptide reads, in one-letter code: Peptidyl-prolyl cis-trans isomerase NIMA-interacting 4 (131 aa).

The interval 1–25 (MPPKGKSGSGKGGKGGAASGSDSAD) is necessary for nuclear localization and DNA-binding. Positions 1 to 39 (MPPKGKSGSGKGGKGGAASGSDSADKKSQGPKGGGNAVK) are disordered. The interval 1–41 (MPPKGKSGSGKGGKGGAASGSDSADKKSQGPKGGGNAVKVR) is necessary for association with the pre-rRNP complexes. Gly residues predominate over residues 7-18 (SGSGKGGKGGAA). The residue at position 19 (Ser19) is a Phosphoserine; by CK2. In terms of domain architecture, PpiC spans 35–129 (GNAVKVRHIL…FGYHIIMVEG (95 aa)).

The protein belongs to the PpiC/parvulin rotamase family. PIN4 subfamily. As to quaternary structure, found in pre-ribosomal ribonucleoprotein (pre-rRNP) complexes. Phosphorylated. Phosphorylation occurs both in the nucleus and the cytoplasm. Phosphorylation at Ser-19 does not affect its PPIase activity but is required for nuclear localization, and the dephosphorylation is a prerequisite for the binding to DNA. The unphosphorylated form associates with the pre-rRNP complexes in the nucleus.

The protein resides in the nucleus. It localises to the nucleolus. The protein localises to the cytoplasm. It is found in the cytoskeleton. Its subcellular location is the spindle. It catalyses the reaction [protein]-peptidylproline (omega=180) = [protein]-peptidylproline (omega=0). Involved as a ribosomal RNA processing factor in ribosome biogenesis. Binds to tightly bent AT-rich stretches of double-stranded DNA. The polypeptide is Peptidyl-prolyl cis-trans isomerase NIMA-interacting 4 (Pin4) (Mus musculus (Mouse)).